Reading from the N-terminus, the 925-residue chain is NADH:fumarate oxidoreductase (925 aa).

Residue T447 is modified to FMN phosphoryl threonine. Residues A492, E511, N519, T520, A525, G526, and V633 each contribute to the FAD site. A525 is a fumarate binding site. A525 contacts succinate. H719, S731, and E732 together coordinate succinate. Fumarate-binding residues include S731 and E732. R756 (proton donor) is an active-site residue. Residue H859 participates in fumarate binding. Residue H859 coordinates succinate. H860 and E889 together coordinate FAD. Fumarate contacts are provided by R899 and G902. R899 and G902 together coordinate succinate. Residues A904 and V905 each contribute to the FAD site.

The protein belongs to the FAD-dependent oxidoreductase 2 family. FRD/SDH subfamily. As to quaternary structure, monomer. It depends on FAD as a cofactor. FMN is required as a cofactor. Is flavinylated on Thr-447 by ApbE2, encoded in a neighboring gene. Flavinylation is essential for catalytic activity.

It is found in the cytoplasm. The catalysed reaction is succinate + NAD(+) = fumarate + NADH + H(+). Catalyzes the anaerobic reduction of fumarate to succinate. Uses NADH as the inherent electron donor in this process. Is involved in anaerobic fumarate respiration in K.pneumoniae. The protein is NADH:fumarate oxidoreductase of Klebsiella pneumoniae (strain 342).